Consider the following 226-residue polypeptide: ATP synthase F(0) complex subunit a (226 aa).

Transmembrane regions (helical) follow at residues 12–32 (PTMM…ILFP), 68–88 (WTLM…LGLL), 97–117 (QLSM…FMGF), 135–155 (IFLI…QPMA), 164–184 (ITAG…LMDI), and 189–209 (ALIT…VAMI).

Belongs to the ATPase A chain family. As to quaternary structure, component of the ATP synthase complex composed at least of ATP5F1A/subunit alpha, ATP5F1B/subunit beta, ATP5MC1/subunit c (homooctomer), MT-ATP6/subunit a, MT-ATP8/subunit 8, ATP5ME/subunit e, ATP5MF/subunit f, ATP5MG/subunit g, ATP5MK/subunit k, ATP5MJ/subunit j, ATP5F1C/subunit gamma, ATP5F1D/subunit delta, ATP5F1E/subunit epsilon, ATP5PF/subunit F6, ATP5PB/subunit b, ATP5PD/subunit d, ATP5PO/subunit OSCP. ATP synthase complex consists of a soluble F(1) head domain (subunits alpha(3) and beta(3)) - the catalytic core - and a membrane F(0) domain - the membrane proton channel (subunits c, a, 8, e, f, g, k and j). These two domains are linked by a central stalk (subunits gamma, delta, and epsilon) rotating inside the F1 region and a stationary peripheral stalk (subunits F6, b, d, and OSCP). Interacts with DNAJC30; interaction is direct.

The protein localises to the mitochondrion inner membrane. The catalysed reaction is H(+)(in) = H(+)(out). Its function is as follows. Subunit a, of the mitochondrial membrane ATP synthase complex (F(1)F(0) ATP synthase or Complex V) that produces ATP from ADP in the presence of a proton gradient across the membrane which is generated by electron transport complexes of the respiratory chain. ATP synthase complex consist of a soluble F(1) head domain - the catalytic core - and a membrane F(1) domain - the membrane proton channel. These two domains are linked by a central stalk rotating inside the F(1) region and a stationary peripheral stalk. During catalysis, ATP synthesis in the catalytic domain of F(1) is coupled via a rotary mechanism of the central stalk subunits to proton translocation. With the subunit c (ATP5MC1), forms the proton-conducting channel in the F(0) domain, that contains two crucial half-channels (inlet and outlet) that facilitate proton movement from the mitochondrial intermembrane space (IMS) into the matrix. Protons are taken up via the inlet half-channel and released through the outlet half-channel, following a Grotthuss mechanism. The sequence is that of ATP synthase F(0) complex subunit a from Equus asinus (Donkey).